Consider the following 415-residue polypeptide: Amino acid decarboxylase lolD2 (415 aa).

N6-(pyridoxal phosphate)lysine is present on K62. Pyridoxal 5'-phosphate is bound by residues S194, G231, and 266–269 (EPGT). 315–316 (IV) lines the substrate pocket. The active-site Proton donor; shared with dimeric partner is C351. C351 carries the S-nitrosocysteine modification. Substrate is bound at residue D352. Y381 serves as a coordination point for pyridoxal 5'-phosphate.

This sequence belongs to the Orn/Lys/Arg decarboxylase class-II family. As to quaternary structure, homodimer. Pyridoxal 5'-phosphate serves as cofactor.

It participates in alkaloid biosynthesis. Functionally, amino acid decarboxylase; part of the gene cluster that mediates the biosynthesis of loline alkaloids, potent insecticidal agents composed of a pyrrolizidine ring system and an uncommon ether bridge linking carbons 2 and 7. Lolines are structurally differentiated by the various modifications of the L-amino group and include norloline, loline, N-methylloline, N-acetylloline, N-acetylnorloline, and N-formylloline. The first committed step is the condensation of O-acetyl-L-homoserine (derived from L-aspartic acid) and L-proline, probably catalyzed by the gamma-type pyridoxal 5'-phosphate(PLP)-dependent enzyme lolC, to give the diamino diacid, NACPP. Ensuing cyclization, decarboxylation, and acetylation steps yield 1-exo-acetamidopyrrolizidine (AcAP). LolO is required for installation of the ether bridge upon the pathway intermediate, 1-exo-acetamidopyrrolizidine (AcAP). In sequential 2-oxoglutarate- and O(2)-consuming steps, lolO removes hydrogens from C2 and C7 of AcAP to form both carbon-oxygen bonds in N-acetylnorloline (NANL), the precursor to all other lolines. The enzymes lolD, lolE, lolF and lolT have also been proposed to be involved in the ether-bridge installation. Further processing of the exocyclic moiety of NANL by fungal N-acetamidase (LolN), methyltransferase (LolM), and cytochrome P450 (LolP) enzymes, with occasional involvement of a plant acetyltransferase, generates the other known lolines. LolN transforms NANL to norlonine which is monomethylated and dimethylated to respectively lonine and N-methyllonine (NML) by lolM. LolP catalyzes hydroxylation of the methyl group in N-methylloline (NML) and further oxygenation to N-formylloline (NFL). A plant acetyltransferase is responsible for the acetylation of loline to form N-acetylloline (NAL). LolA might interact with aspartate kinase to prevent feedback inhibition of its activity by these end products and thereby promote production of L-homoserine from L-aspartate. The chain is Amino acid decarboxylase lolD2 from Epichloe uncinata (Endophyte fungus).